The primary structure comprises 296 residues: Phosphatidylserine decarboxylase proenzyme (296 aa).

Active-site charge relay system; for autoendoproteolytic cleavage activity residues include aspartate 113, histidine 169, and serine 256. Serine 256 serves as the catalytic Schiff-base intermediate with substrate; via pyruvic acid; for decarboxylase activity. Pyruvic acid (Ser); by autocatalysis is present on serine 256.

It belongs to the phosphatidylserine decarboxylase family. PSD-B subfamily. Prokaryotic type II sub-subfamily. In terms of assembly, heterodimer of a large membrane-associated beta subunit and a small pyruvoyl-containing alpha subunit. Pyruvate is required as a cofactor. Is synthesized initially as an inactive proenzyme. Formation of the active enzyme involves a self-maturation process in which the active site pyruvoyl group is generated from an internal serine residue via an autocatalytic post-translational modification. Two non-identical subunits are generated from the proenzyme in this reaction, and the pyruvate is formed at the N-terminus of the alpha chain, which is derived from the carboxyl end of the proenzyme. The autoendoproteolytic cleavage occurs by a canonical serine protease mechanism, in which the side chain hydroxyl group of the serine supplies its oxygen atom to form the C-terminus of the beta chain, while the remainder of the serine residue undergoes an oxidative deamination to produce ammonia and the pyruvoyl prosthetic group on the alpha chain. During this reaction, the Ser that is part of the protease active site of the proenzyme becomes the pyruvoyl prosthetic group, which constitutes an essential element of the active site of the mature decarboxylase.

It is found in the cell membrane. It carries out the reaction a 1,2-diacyl-sn-glycero-3-phospho-L-serine + H(+) = a 1,2-diacyl-sn-glycero-3-phosphoethanolamine + CO2. The protein operates within phospholipid metabolism; phosphatidylethanolamine biosynthesis; phosphatidylethanolamine from CDP-diacylglycerol: step 2/2. Its function is as follows. Catalyzes the formation of phosphatidylethanolamine (PtdEtn) from phosphatidylserine (PtdSer). The chain is Phosphatidylserine decarboxylase proenzyme from Clostridium beijerinckii (strain ATCC 51743 / NCIMB 8052) (Clostridium acetobutylicum).